The chain runs to 587 residues: A-type ATP synthase subunit A (587 aa).

Residue 234-241 (GPFGSGKT) participates in ATP binding.

Belongs to the ATPase alpha/beta chains family. In terms of assembly, the N-terminus (approximately residues 106-122) interacts with subunit H. Has multiple subunits with at least A(3), B(3), C, D, E(1 or 2), F, H(2), I and proteolipid K(x).

The protein localises to the cell membrane. The catalysed reaction is ATP + H2O + 4 H(+)(in) = ADP + phosphate + 5 H(+)(out). ATP hydrolysis is inhibited by N',N'-dicyclohexylcarbodiimide. Functionally, component of the A-type ATP synthase that produces ATP from ADP in the presence of a proton gradient across the membrane. The A chain is the catalytic subunit. Hydrolyzes ATP, GTP (86% of ATPase rate) and UTP (54% of ATPase rate), has very poor activity on CTP. The sequence is that of A-type ATP synthase subunit A from Methanocaldococcus jannaschii (strain ATCC 43067 / DSM 2661 / JAL-1 / JCM 10045 / NBRC 100440) (Methanococcus jannaschii).